A 395-amino-acid chain; its full sequence is Immediate-early protein ICP-46 (395 aa).

The protein belongs to the IIV-6 393L family.

The chain is Immediate-early protein ICP-46 (ICR489) from Dryophytes versicolor (chameleon treefrog).